Consider the following 347-residue polypeptide: Dihydroorotase (347 aa).

Residues His13 and His15 each contribute to the Zn(2+) site. Residues 15–17 (HLR) and Asn41 contribute to the substrate site. Residues Lys99, His136, and His174 each contribute to the Zn(2+) site. An N6-carboxylysine modification is found at Lys99. Residue His136 coordinates substrate. Position 219 (Leu219) interacts with substrate. Residue Asp247 coordinates Zn(2+). Residue Asp247 is part of the active site. Positions 251 and 263 each coordinate substrate.

Belongs to the metallo-dependent hydrolases superfamily. DHOase family. Class II DHOase subfamily. In terms of assembly, homodimer. Zn(2+) is required as a cofactor.

The catalysed reaction is (S)-dihydroorotate + H2O = N-carbamoyl-L-aspartate + H(+). It participates in pyrimidine metabolism; UMP biosynthesis via de novo pathway; (S)-dihydroorotate from bicarbonate: step 3/3. Its function is as follows. Catalyzes the reversible cyclization of carbamoyl aspartate to dihydroorotate. In Sinorhizobium medicae (strain WSM419) (Ensifer medicae), this protein is Dihydroorotase.